The following is a 431-amino-acid chain: Enolase (431 aa).

A (2R)-2-phosphoglycerate-binding site is contributed by Gln167. Glu209 (proton donor) is an active-site residue. Residues Asp246, Glu289, and Asp316 each contribute to the Mg(2+) site. (2R)-2-phosphoglycerate is bound by residues Lys341, Arg370, Ser371, and Lys392. Lys341 acts as the Proton acceptor in catalysis.

This sequence belongs to the enolase family. In terms of assembly, component of the RNA degradosome, a multiprotein complex involved in RNA processing and mRNA degradation. Mg(2+) serves as cofactor.

The protein resides in the cytoplasm. It localises to the secreted. The protein localises to the cell surface. It catalyses the reaction (2R)-2-phosphoglycerate = phosphoenolpyruvate + H2O. It participates in carbohydrate degradation; glycolysis; pyruvate from D-glyceraldehyde 3-phosphate: step 4/5. Its function is as follows. Catalyzes the reversible conversion of 2-phosphoglycerate (2-PG) into phosphoenolpyruvate (PEP). It is essential for the degradation of carbohydrates via glycolysis. The polypeptide is Enolase (Shewanella sp. (strain MR-4)).